Consider the following 362-residue polypeptide: 3-dehydroquinate synthase (362 aa).

NAD(+) is bound by residues 71 to 76, 105 to 109, 129 to 130, Lys142, and Lys151; these read DGEQNK, GVIGD, and TT. Zn(2+) contacts are provided by Glu184, His247, and His264.

It belongs to the sugar phosphate cyclases superfamily. Dehydroquinate synthase family. It depends on Co(2+) as a cofactor. Requires Zn(2+) as cofactor. NAD(+) is required as a cofactor.

It is found in the cytoplasm. The catalysed reaction is 7-phospho-2-dehydro-3-deoxy-D-arabino-heptonate = 3-dehydroquinate + phosphate. It functions in the pathway metabolic intermediate biosynthesis; chorismate biosynthesis; chorismate from D-erythrose 4-phosphate and phosphoenolpyruvate: step 2/7. In terms of biological role, catalyzes the conversion of 3-deoxy-D-arabino-heptulosonate 7-phosphate (DAHP) to dehydroquinate (DHQ). This Blochmanniella pennsylvanica (strain BPEN) protein is 3-dehydroquinate synthase.